We begin with the raw amino-acid sequence, 139 residues long: Small ribosomal subunit protein uS12 (139 aa).

Asp-102 carries the 3-methylthioaspartic acid modification.

It belongs to the universal ribosomal protein uS12 family. As to quaternary structure, part of the 30S ribosomal subunit. Contacts proteins S8 and S17. May interact with IF1 in the 30S initiation complex.

Its function is as follows. With S4 and S5 plays an important role in translational accuracy. Interacts with and stabilizes bases of the 16S rRNA that are involved in tRNA selection in the A site and with the mRNA backbone. Located at the interface of the 30S and 50S subunits, it traverses the body of the 30S subunit contacting proteins on the other side and probably holding the rRNA structure together. The combined cluster of proteins S8, S12 and S17 appears to hold together the shoulder and platform of the 30S subunit. The protein is Small ribosomal subunit protein uS12 of Mycoplasma capricolum subsp. capricolum (strain California kid / ATCC 27343 / NCTC 10154).